Consider the following 403-residue polypeptide: Argininosuccinate synthase (403 aa).

ATP is bound by residues 10–18 (AYSGGVDTS) and A38. Y89 provides a ligand contact to L-citrulline. G119 contacts ATP. T121, N125, and D126 together coordinate L-aspartate. N125 is an L-citrulline binding site. L-citrulline-binding residues include R129, S177, S186, E262, and Y274.

It belongs to the argininosuccinate synthase family. Type 1 subfamily. As to quaternary structure, homotetramer.

Its subcellular location is the cytoplasm. It catalyses the reaction L-citrulline + L-aspartate + ATP = 2-(N(omega)-L-arginino)succinate + AMP + diphosphate + H(+). The protein operates within amino-acid biosynthesis; L-arginine biosynthesis; L-arginine from L-ornithine and carbamoyl phosphate: step 2/3. This is Argininosuccinate synthase from Synechococcus sp. (strain CC9605).